The chain runs to 466 residues: UDP-N-acetylmuramoylalanine--D-glutamate ligase (466 aa).

An ATP-binding site is contributed by 121-127 (GTNGKST).

The protein belongs to the MurCDEF family.

It is found in the cytoplasm. The catalysed reaction is UDP-N-acetyl-alpha-D-muramoyl-L-alanine + D-glutamate + ATP = UDP-N-acetyl-alpha-D-muramoyl-L-alanyl-D-glutamate + ADP + phosphate + H(+). It participates in cell wall biogenesis; peptidoglycan biosynthesis. Cell wall formation. Catalyzes the addition of glutamate to the nucleotide precursor UDP-N-acetylmuramoyl-L-alanine (UMA). The polypeptide is UDP-N-acetylmuramoylalanine--D-glutamate ligase (Rhodopseudomonas palustris (strain HaA2)).